Consider the following 305-residue polypeptide: UDP-N-acetylenolpyruvoylglucosamine reductase 2 (305 aa).

Residues 33–197 enclose the FAD-binding PCMH-type domain; it reads VGGKADVFVA…LEARFELEEG (165 aa). Arg176 is a catalytic residue. The active-site Proton donor is Ser226. Glu296 is a catalytic residue.

Belongs to the MurB family. Requires FAD as cofactor.

Its subcellular location is the cytoplasm. It catalyses the reaction UDP-N-acetyl-alpha-D-muramate + NADP(+) = UDP-N-acetyl-3-O-(1-carboxyvinyl)-alpha-D-glucosamine + NADPH + H(+). It participates in cell wall biogenesis; peptidoglycan biosynthesis. Cell wall formation. This Bacillus cereus (strain ATCC 14579 / DSM 31 / CCUG 7414 / JCM 2152 / NBRC 15305 / NCIMB 9373 / NCTC 2599 / NRRL B-3711) protein is UDP-N-acetylenolpyruvoylglucosamine reductase 2 (murB2).